A 349-amino-acid polypeptide reads, in one-letter code: D-alanine--D-alanine ligase (349 aa).

The ATP-grasp domain maps to asparagine 140 to glutamate 345. Asparagine 169 to serine 224 contributes to the ATP binding site. Residues aspartate 300, glutamate 312, and asparagine 314 each coordinate Mg(2+).

This sequence belongs to the D-alanine--D-alanine ligase family. It depends on Mg(2+) as a cofactor. Requires Mn(2+) as cofactor.

It localises to the cytoplasm. It catalyses the reaction 2 D-alanine + ATP = D-alanyl-D-alanine + ADP + phosphate + H(+). The protein operates within cell wall biogenesis; peptidoglycan biosynthesis. Cell wall formation. The chain is D-alanine--D-alanine ligase from Leptospira biflexa serovar Patoc (strain Patoc 1 / Ames).